The following is a 278-amino-acid chain: Digeranylgeranylglyceryl phosphate synthase (278 aa).

The next 8 helical transmembrane spans lie at 12 to 32, 34 to 54, 92 to 112, 129 to 149, 153 to 173, 204 to 224, 226 to 246, and 257 to 277; these read LKNCLTASFGAFIGGLIASYF, LAMVDNLILASIVVFLVCGFG, LVVMGLFISLFNISCFLMAVL, IIGNLIVAYLTGSVFIFGGIA, IDVTIMLFLCALFAMWSREII, FLLIFAIFLSPLPYLFGFFGI, YMISVVFCDLLFLFGIYKLVF, and SRNIKIVTNLVLIAFLIGSLF.

Belongs to the UbiA prenyltransferase family. DGGGP synthase subfamily. It depends on Mg(2+) as a cofactor.

The protein resides in the cell membrane. It catalyses the reaction sn-3-O-(geranylgeranyl)glycerol 1-phosphate + (2E,6E,10E)-geranylgeranyl diphosphate = 2,3-bis-O-(geranylgeranyl)-sn-glycerol 1-phosphate + diphosphate. Its pathway is membrane lipid metabolism; glycerophospholipid metabolism. Functionally, prenyltransferase that catalyzes the transfer of the geranylgeranyl moiety of geranylgeranyl diphosphate (GGPP) to the C2 hydroxyl of (S)-3-O-geranylgeranylglyceryl phosphate (GGGP). This reaction is the second ether-bond-formation step in the biosynthesis of archaeal membrane lipids. This Methanococcus maripaludis (strain DSM 14266 / JCM 13030 / NBRC 101832 / S2 / LL) protein is Digeranylgeranylglyceryl phosphate synthase.